A 367-amino-acid polypeptide reads, in one-letter code: tRNA-specific 2-thiouridylase MnmA (367 aa).

Residues 7–14 (AMSGGVDS) and Met-33 contribute to the ATP site. Residue Cys-108 is the Nucleophile of the active site. An intrachain disulfide couples Cys-108 to Cys-200. ATP is bound at residue Gly-132. The interaction with tRNA stretch occupies residues 150–152 (KDQ). Residue Cys-200 is the Cysteine persulfide intermediate of the active site. The segment at 301–302 (RY) is interaction with tRNA.

This sequence belongs to the MnmA/TRMU family.

It is found in the cytoplasm. The catalysed reaction is S-sulfanyl-L-cysteinyl-[protein] + uridine(34) in tRNA + AH2 + ATP = 2-thiouridine(34) in tRNA + L-cysteinyl-[protein] + A + AMP + diphosphate + H(+). In terms of biological role, catalyzes the 2-thiolation of uridine at the wobble position (U34) of tRNA, leading to the formation of s(2)U34. The polypeptide is tRNA-specific 2-thiouridylase MnmA (Thermus thermophilus (strain ATCC BAA-163 / DSM 7039 / HB27)).